Consider the following 410-residue polypeptide: Arginine biosynthesis bifunctional protein ArgJ (410 aa).

Substrate is bound by residues Thr160, Lys186, Thr197, Glu283, Asn405, and Thr410. The active-site Nucleophile is the Thr197.

The protein belongs to the ArgJ family. As to quaternary structure, heterotetramer of two alpha and two beta chains.

It is found in the cytoplasm. The enzyme catalyses N(2)-acetyl-L-ornithine + L-glutamate = N-acetyl-L-glutamate + L-ornithine. It carries out the reaction L-glutamate + acetyl-CoA = N-acetyl-L-glutamate + CoA + H(+). Its pathway is amino-acid biosynthesis; L-arginine biosynthesis; L-ornithine and N-acetyl-L-glutamate from L-glutamate and N(2)-acetyl-L-ornithine (cyclic): step 1/1. It functions in the pathway amino-acid biosynthesis; L-arginine biosynthesis; N(2)-acetyl-L-ornithine from L-glutamate: step 1/4. Its activity is regulated as follows. Competitively inhibited by L-ornithine. Functionally, catalyzes two activities which are involved in the cyclic version of arginine biosynthesis: the synthesis of N-acetylglutamate from glutamate and acetyl-CoA as the acetyl donor, and of ornithine by transacetylation between N(2)-acetylornithine and glutamate. This Geobacillus stearothermophilus (Bacillus stearothermophilus) protein is Arginine biosynthesis bifunctional protein ArgJ.